The following is a 436-amino-acid chain: Enolase 1 (436 aa).

Ser40 is a Mg(2+) binding site. A disulfide bond links Cys147 and Cys169. Residues Gln164 and Glu208 each contribute to the (2R)-2-phosphoglycerate site. The Proton donor role is filled by Glu208. Positions 243, 296, and 322 each coordinate Mg(2+). Asp322 contributes to the (2R)-2-phosphoglycerate binding site. Lys347 (proton acceptor) is an active-site residue. 2 residues coordinate (2R)-2-phosphoglycerate: Arg376 and Ser377.

Belongs to the enolase family. In terms of assembly, homodimer. Homotetramer. Interacts with methyltransferase METH; the interaction inhibits METH catalytic activity; 2-phosphoglycerate binding to ENO prevents the interaction with METH. Mg(2+) is required as a cofactor.

The protein localises to the cytoplasm. The protein resides in the nucleus. The catalysed reaction is (2R)-2-phosphoglycerate = phosphoenolpyruvate + H2O. Its pathway is carbohydrate degradation; glycolysis; pyruvate from D-glyceraldehyde 3-phosphate: step 4/5. Functionally, glycolytic enzyme that catalyzes the conversion of 2-phosphoglycerate to phosphoenolpyruvate. Inhibits tRNA methyltransferase METH catalytic activity in the absence of 2-phosphoglycerate. The protein is Enolase 1 of Entamoeba histolytica (strain ATCC 30459 / HM-1:IMSS / ABRM).